We begin with the raw amino-acid sequence, 782 residues long: Vacuolar import and degradation protein 27 (782 aa).

Residues Ser-170, Ser-195, and Ser-196 each carry the phosphoserine modification. The span at 188 to 200 (DDDDELDSSSDDF) shows a compositional bias: acidic residues. The segment at 188–215 (DDDDELDSSSDDFQDAKDTSFEHEKESE) is disordered. Positions 201–215 (QDAKDTSFEHEKESE) are enriched in basic and acidic residues. Ser-222 is modified (phosphoserine). The span at 372 to 384 (DDRSNEERDKESS) shows a compositional bias: basic and acidic residues. Positions 372–422 (DDRSNEERDKESSESENDSEDEDDENDHSKRIISSEAFEEPRRATSKGNSS) are disordered. Positions 385–397 (ESENDSEDEDDEN) are enriched in acidic residues. A Phosphothreonine modification is found at Thr-486.

It belongs to the VID27 family.

It localises to the cytoplasm. In terms of biological role, has a role in the negative regulation of gluconeogenesis. Required for vacuolar catabolite degradation of fructose-1,6-bisphosphatase (FBPase). This is Vacuolar import and degradation protein 27 (VID27) from Saccharomyces cerevisiae (strain ATCC 204508 / S288c) (Baker's yeast).